The primary structure comprises 233 residues: MGQKVHPNGIRLGIVKPWNSTWYANTKEFADNLDSDFKVRKYLTKELEKASVSRIVIERPAKSIRVTIHTARPGIVIGKKGEDVEKLRKVVADIAGVPAQINIAEVRKPELDAKLVADSITSQLERRVMFRRAMKRAVQNAMRLGAKGIKVEVSGRLGGAEIARTEWYREGRVPLHTLRADIDYNTSEAHTTYGVIGVKVWIFKGEILGGMAAVEQPEKPAAQPKKQQRKGRK.

The 69-residue stretch at 39 to 107 folds into the KH type-2 domain; the sequence is VRKYLTKELE…PAQINIAEVR (69 aa).

It belongs to the universal ribosomal protein uS3 family. Part of the 30S ribosomal subunit. Forms a tight complex with proteins S10 and S14.

Its function is as follows. Binds the lower part of the 30S subunit head. Binds mRNA in the 70S ribosome, positioning it for translation. The sequence is that of Small ribosomal subunit protein uS3 from Pectobacterium carotovorum subsp. carotovorum (strain PC1).